Consider the following 559-residue polypeptide: Nucleoprotein (559 aa).

Residues 53-235 (MRKEKRTDSD…ITQEQSQINI (183 aa)) are binding site for the cap structure m7GTP. Positions 378 and 380 each coordinate Mn(2+). The Zn(2+) site is built by Glu388, Cys495, His498, and Cys519. Asp523 contacts Mn(2+).

This sequence belongs to the arenaviridae nucleocapsid protein family. Homomultimerizes to form the nucleocapsid. Binds to viral genomic RNA. Interacts with glycoprotein G2. Interacts with protein Z; this interaction probably directs the encapsidated genome to budding sites. Interacts with protein L; this interaction does not interfere with Z-L interaction. Interacts with host IKBKE (via Protein kinase domain); the interaction inhibits IKBKE kinase activity.

The protein resides in the virion. Its subcellular location is the host cytoplasm. In terms of biological role, encapsidates the genome, protecting it from nucleases. The encapsidated genomic RNA is termed the nucleocapsid (NC). Serves as template for viral transcription and replication. The increased presence of protein N in host cell does not seem to trigger the switch from transcription to replication as observed in other negative strain RNA viruses. Through the interaction with host IKBKE, strongly inhibits the phosphorylation and nuclear translocation of host IRF3, a protein involved in interferon activation pathway, leading to the inhibition of interferon-beta and IRF3-dependent promoters activation. Also encodes a functional 3'-5' exoribonuclease that degrades preferentially dsRNA substrates and thereby participates in the suppression of interferon induction. This chain is Nucleoprotein, found in Sooretamys angouya (Paraguayan rice rat).